We begin with the raw amino-acid sequence, 121 residues long: NADH-quinone oxidoreductase subunit A (121 aa).

Helical transmembrane passes span 8-28 (YLPI…TIIG), 65-85 (LVAI…PWAI), and 93-113 (QGMI…FYII).

Belongs to the complex I subunit 3 family. In terms of assembly, NDH-1 is composed of 14 different subunits. Subunits NuoA, H, J, K, L, M, N constitute the membrane sector of the complex.

Its subcellular location is the cell inner membrane. The enzyme catalyses a quinone + NADH + 5 H(+)(in) = a quinol + NAD(+) + 4 H(+)(out). NDH-1 shuttles electrons from NADH, via FMN and iron-sulfur (Fe-S) centers, to quinones in the respiratory chain. The immediate electron acceptor for the enzyme in this species is believed to be a menaquinone. Couples the redox reaction to proton translocation (for every two electrons transferred, four hydrogen ions are translocated across the cytoplasmic membrane), and thus conserves the redox energy in a proton gradient. In Flavobacterium psychrophilum (strain ATCC 49511 / DSM 21280 / CIP 103535 / JIP02/86), this protein is NADH-quinone oxidoreductase subunit A.